A 469-amino-acid polypeptide reads, in one-letter code: uncharacterized protein (469 aa).

The segment covering 152-161 has biased composition (basic and acidic residues); it reads VREGKEEKKG. The tract at residues 152-174 is disordered; the sequence is VREGKEEKKGGPPGRGPPGWRRR. 2 coiled-coil regions span residues 346-375 and 423-453; these read KAALEQNDRLRSELEMEVALLQSAKERSES and SDITENRIKSIEHEAIQLETENMILKKKIKG.

This is an uncharacterized protein from Homo sapiens (Human).